A 578-amino-acid chain; its full sequence is ER degradation-enhancing alpha-mannosidase-like protein 2 (578 aa).

A signal peptide spans Met1–Gly21. 4 N-linked (GlcNAc...) asparagine glycosylation sites follow: Asn90, Asn112, Asn289, and Asn450. Positions Lys517–Ser557 are disordered. The span at Glu538–Pro548 shows a compositional bias: basic and acidic residues.

It belongs to the glycosyl hydrolase 47 family. Post-translationally, N-glycosylated. Expressed ubiquitously in all tissues tested with slightly higher levels detected in small intestine and peripheral blood leukocytes and weakest levels in brain and skeletal muscle.

The protein localises to the endoplasmic reticulum lumen. Functionally, involved in the endoplasmic reticulum-associated degradation (ERAD) pathway that targets misfolded glycoproteins for degradation in an N-glycan-dependent manner. May initiate ERAD by promoting the first mannose trimming step of ERAD substrates, from Man9GlcNAc2 to Man8GlcNAc2. Seems to recognize and bind to exposed hydrophobic regions in target proteins. This chain is ER degradation-enhancing alpha-mannosidase-like protein 2 (EDEM2), found in Homo sapiens (Human).